We begin with the raw amino-acid sequence, 265 residues long: MNFIVEALNEVRKRKPLVHNITNFVVMNTTANALLALGASPVMAHAEEELEEMIGLADAVVINIGTLDSWWRKSMIKAVEIANEMKKPIVLDPVGAGATKLRTKVALEILDRGVTVLKGNFGEISSLLGEFGKTRGVDSSEYDEEKAKVLALSAAKEFNTTVAVTGAVDYVSDGGKVFAIYNGHKLLERVTGTGCIVTAITGAFVAVTEPLRAAISSLVVFGIAAEKAYEEAKYPGSFHVKLYDWLYRIDGEVIRKYAKVREVGV.

A substrate-binding site is contributed by Met-43. Lys-118 and Thr-165 together coordinate ATP. Gly-192 contacts substrate.

Belongs to the Thz kinase family. Mg(2+) serves as cofactor.

The catalysed reaction is 5-(2-hydroxyethyl)-4-methylthiazole + ATP = 4-methyl-5-(2-phosphooxyethyl)-thiazole + ADP + H(+). The protein operates within cofactor biosynthesis; thiamine diphosphate biosynthesis; 4-methyl-5-(2-phosphoethyl)-thiazole from 5-(2-hydroxyethyl)-4-methylthiazole: step 1/1. Catalyzes the phosphorylation of the hydroxyl group of 4-methyl-5-beta-hydroxyethylthiazole (THZ). The chain is Hydroxyethylthiazole kinase from Pyrococcus abyssi (strain GE5 / Orsay).